A 317-amino-acid polypeptide reads, in one-letter code: Ret finger protein-like 3 (317 aa).

The RING-type zinc-finger motif lies at 40–82 (CPVCSDYLEKPMSLECGCTVCLKCINSLQKEPHGEDLLCCCCS). Positions 107 to 301 (EPKLKKILQM…DQGVLSICPL (195 aa)) constitute a B30.2/SPRY domain.

In terms of tissue distribution, expressed during neurogenesis in differentiating human embryonic stem cells and in the developing human neocortex.

It is found in the cytoplasm. The protein resides in the nucleus. In terms of biological role, (Microbial infection) Stimulates the activity of Human Immunodeficiency Virus 1/HIV-1 pre-integration complex. This is Ret finger protein-like 3 (RFPL3) from Homo sapiens (Human).